Consider the following 255-residue polypeptide: 1-acyl-sn-glycerol-3-phosphate acyltransferase (255 aa).

The short motif at 78-83 is the HXXXXD motif element; the sequence is HVSWLD.

It belongs to the 1-acyl-sn-glycerol-3-phosphate acyltransferase family.

The protein resides in the cell inner membrane. The enzyme catalyses a 1-acyl-sn-glycero-3-phosphate + an acyl-CoA = a 1,2-diacyl-sn-glycero-3-phosphate + CoA. The protein operates within phospholipid metabolism; CDP-diacylglycerol biosynthesis; CDP-diacylglycerol from sn-glycerol 3-phosphate: step 2/3. Functionally, converts lysophosphatidic acid (LPA) into phosphatidic acid by incorporating acyl moiety at the 2 position. This Neisseria gonorrhoeae protein is 1-acyl-sn-glycerol-3-phosphate acyltransferase (plsC).